The chain runs to 418 residues: MGILQDLEFRGLINQQTDAEGLEQLLEKESVKLYCGFDPTADSLHIGHMLPVLMLRRFQLAGHQPIALVGGGTGMIGDPSGKKAERTLNTKDTVAYYTESIKNQLSNFLEFENVDNPATMANNYDWLGNLDVISFLRDIGKNFGLNYMLAKDTVASRLETGISFTEFSYMILQSYDFLNLYQHHNCRLQIGGSDQWGNITAGLELIRKSEEDAKAYGLTIPLVTKSDGTKFGKTEGGAIWLDPEKTTPYEFYQFWINTDDRDVVKYLKYFTFLSHEEILELEKQVAEAPEKRAAQKALGAEMTKLVHGEEALEQAIKISAALFSGSVAELTASEIEQGFKDVPSVERTAEDTVLIDLLVESKISPSKRQAREDVTNGAIYVNGERTQALDYVVTEKDRIEGKFTIIRRGKKKYFLIRY.

Tyr34 provides a ligand contact to L-tyrosine. The short motif at Pro39–His48 is the 'HIGH' region element. L-tyrosine is bound by residues Tyr169 and Gln173. The short motif at Lys230–Thr234 is the 'KMSKS' region element. Lys233 provides a ligand contact to ATP. The S4 RNA-binding domain maps to Thr352–Tyr418.

The protein belongs to the class-I aminoacyl-tRNA synthetase family. TyrS type 1 subfamily. In terms of assembly, homodimer.

Its subcellular location is the cytoplasm. The enzyme catalyses tRNA(Tyr) + L-tyrosine + ATP = L-tyrosyl-tRNA(Tyr) + AMP + diphosphate + H(+). Functionally, catalyzes the attachment of tyrosine to tRNA(Tyr) in a two-step reaction: tyrosine is first activated by ATP to form Tyr-AMP and then transferred to the acceptor end of tRNA(Tyr). This chain is Tyrosine--tRNA ligase 1, found in Bacillus cereus (strain ATCC 10987 / NRS 248).